Consider the following 258-residue polypeptide: UPF0246 protein CGSHiEE_07045 (258 aa).

Belongs to the UPF0246 family.

This is UPF0246 protein CGSHiEE_07045 from Haemophilus influenzae (strain PittEE).